Reading from the N-terminus, the 420-residue chain is Protein translocase subunit SecF (420 aa).

A run of 6 helical transmembrane segments spans residues 7–27 (FSLL…AGVL), 250–270 (LLVR…FLYV), 276–296 (WFFA…MVSF), 309–327 (IAAI…VVVF), 358–378 (VVTT…TEGG), and 388–408 (VGMV…IALI).

The protein belongs to the SecD/SecF family. SecF subfamily. Forms a complex with SecD. Part of the essential Sec protein translocation apparatus which comprises SecA, SecYEG and auxiliary proteins SecDF. Other proteins may also be involved.

It localises to the cell inner membrane. In terms of biological role, part of the Sec protein translocase complex. Interacts with the SecYEG preprotein conducting channel. SecDF uses the proton motive force (PMF) to complete protein translocation after the ATP-dependent function of SecA. This Treponema pallidum (strain Nichols) protein is Protein translocase subunit SecF.